Consider the following 434-residue polypeptide: Cytochrome P450 144 (434 aa).

The substrate site is built by aspartate 124 and histidine 128. Heme is bound by residues arginine 132, arginine 326, histidine 383, and cysteine 385.

It belongs to the cytochrome P450 family. In terms of assembly, monomer. Heme serves as cofactor.

The polypeptide is Cytochrome P450 144 (cyp144) (Mycobacterium tuberculosis (strain CDC 1551 / Oshkosh)).